The sequence spans 250 residues: N-acyl homoserine lactonase (250 aa).

Positions 104, 106, 108, 109, 169, 191, and 235 each coordinate Zn(2+).

The protein belongs to the metallo-beta-lactamase superfamily. Monomer. Zn(2+) is required as a cofactor.

It catalyses the reaction an N-acyl-L-homoserine lactone + H2O = an N-acyl-L-homoserine + H(+). With respect to regulation, completely inhibited by Cu(2+) and Ag(+). Partially inhibited by Cr(2+), Pb(2+) and Fe(2+). Mg(2+), Ca(2+), Mn(2+), Co(2+), Ni(2+), Zn(2+) and Cd(2+) have no effect on activity. The chelating agents EDTA, 2,2'bipyridine and o-phenanthroline have no effect on enzyme activity. Hydrolyzes acyl homoserine lactones with varying lengths of acyl chains, with a slight preference for substrates without 3-oxo substitution at the C3 position. Has only residual activity towards non-acyl lactones, and no activity towards non-cyclic esters. The sequence is that of N-acyl homoserine lactonase from Bacillus sp.